A 164-amino-acid polypeptide reads, in one-letter code: ATP synthase subunit b 2 (164 aa).

Residues 4–24 (TFWAFVGLVLFLALLVYFQIP) traverse the membrane as a helical segment.

It belongs to the ATPase B chain family. In terms of assembly, F-type ATPases have 2 components, F(1) - the catalytic core - and F(0) - the membrane proton channel. F(1) has five subunits: alpha(3), beta(3), gamma(1), delta(1), epsilon(1). F(0) has three main subunits: a(1), b(2) and c(10-14). The alpha and beta chains form an alternating ring which encloses part of the gamma chain. F(1) is attached to F(0) by a central stalk formed by the gamma and epsilon chains, while a peripheral stalk is formed by the delta and b chains.

The protein localises to the cell inner membrane. Its function is as follows. F(1)F(0) ATP synthase produces ATP from ADP in the presence of a proton or sodium gradient. F-type ATPases consist of two structural domains, F(1) containing the extramembraneous catalytic core and F(0) containing the membrane proton channel, linked together by a central stalk and a peripheral stalk. During catalysis, ATP synthesis in the catalytic domain of F(1) is coupled via a rotary mechanism of the central stalk subunits to proton translocation. Component of the F(0) channel, it forms part of the peripheral stalk, linking F(1) to F(0). The polypeptide is ATP synthase subunit b 2 (Bartonella tribocorum (strain CIP 105476 / IBS 506)).